Here is a 227-residue protein sequence, read N- to C-terminus: Enolase-phosphatase E1 (227 aa).

This sequence belongs to the HAD-like hydrolase superfamily. MasA/MtnC family. Monomer. It depends on Mg(2+) as a cofactor.

The enzyme catalyses 5-methylsulfanyl-2,3-dioxopentyl phosphate + H2O = 1,2-dihydroxy-5-(methylsulfanyl)pent-1-en-3-one + phosphate. The protein operates within amino-acid biosynthesis; L-methionine biosynthesis via salvage pathway; L-methionine from S-methyl-5-thio-alpha-D-ribose 1-phosphate: step 3/6. It participates in amino-acid biosynthesis; L-methionine biosynthesis via salvage pathway; L-methionine from S-methyl-5-thio-alpha-D-ribose 1-phosphate: step 4/6. In terms of biological role, bifunctional enzyme that catalyzes the enolization of 2,3-diketo-5-methylthiopentyl-1-phosphate (DK-MTP-1-P) into the intermediate 2-hydroxy-3-keto-5-methylthiopentenyl-1-phosphate (HK-MTPenyl-1-P), which is then dephosphorylated to form the acireductone 1,2-dihydroxy-3-keto-5-methylthiopentene (DHK-MTPene). The protein is Enolase-phosphatase E1 of Azotobacter vinelandii (strain DJ / ATCC BAA-1303).